The following is a 164-amino-acid chain: Ubiquitin-fold modifier-conjugating enzyme 1 (164 aa).

The active-site Glycyl thioester intermediate is C116.

Belongs to the ubiquitin-conjugating enzyme family. UFC1 subfamily.

Its function is as follows. E2-like enzyme which forms an intermediate with UFM1 via a thioester linkage. The protein is Ubiquitin-fold modifier-conjugating enzyme 1 of Drosophila erecta (Fruit fly).